Consider the following 357-residue polypeptide: 3-isopropylmalate dehydrogenase, chloroplastic (357 aa).

A chloroplast-targeting transit peptide spans 1 to 29 (MALQIAKRLLRCRADSVASSVRFFDRTFT). Arginine 120, arginine 130, arginine 151, and aspartate 238 together coordinate substrate. Mg(2+)-binding residues include aspartate 238, aspartate 262, and aspartate 266. An NAD(+)-binding site is contributed by 296 to 308 (GSAPDIAGKNLAN).

Belongs to the isocitrate and isopropylmalate dehydrogenases family. In terms of assembly, homodimer. Mg(2+) serves as cofactor. Mn(2+) is required as a cofactor.

It is found in the plastid. The protein localises to the chloroplast. The catalysed reaction is (2R,3S)-3-isopropylmalate + NAD(+) = 4-methyl-2-oxopentanoate + CO2 + NADH. It participates in amino-acid biosynthesis; L-leucine biosynthesis; L-leucine from 3-methyl-2-oxobutanoate: step 3/4. Its function is as follows. Catalyzes the oxidation of 3-carboxy-2-hydroxy-4-methylpentanoate (3-isopropylmalate) to 3-carboxy-4-methyl-2-oxopentanoate. The product decarboxylates to 4-methyl-2 oxopentanoate. In Solanum tuberosum (Potato), this protein is 3-isopropylmalate dehydrogenase, chloroplastic.